The following is a 563-amino-acid chain: Arginine--tRNA ligase (563 aa).

Residues 121–131 carry the 'HIGH' region motif; it reads PNIAKPFSIGH.

It belongs to the class-I aminoacyl-tRNA synthetase family. In terms of assembly, monomer.

The protein localises to the cytoplasm. The enzyme catalyses tRNA(Arg) + L-arginine + ATP = L-arginyl-tRNA(Arg) + AMP + diphosphate. The chain is Arginine--tRNA ligase from Streptococcus pneumoniae serotype 19F (strain G54).